Reading from the N-terminus, the 134-residue chain is MKLNSIEVIGKRKSSIAKIILFLPKDGGGEILINGEKAFNYLQNNLRTLKVVCSPFELLNINNYKVHAYVKGGGLSGQADAIKLAISKSLSVFIEKEDKKKLKVNGFLTRNSLCKERRKYGLKKARKAPQFSKR.

This sequence belongs to the universal ribosomal protein uS9 family.

It localises to the plastid. The protein localises to the chloroplast. This is Small ribosomal subunit protein uS9c (rps9) from Euglena gracilis.